The primary structure comprises 375 residues: Kininogen (375 aa).

Residues 1-23 (MKLGVRLCVLVVFSLQLWGPGQG) form the signal peptide. Cystatin kininogen-type domains lie at 35–139 (CDDK…VEAP) and 156–260 (VESE…GPLD). A glycan (N-linked (GlcNAc) asparagine) is linked at Asn-74. 4 cysteine pairs are disulfide-bonded: Cys-91–Cys-102, Cys-115–Cys-133, Cys-211–Cys-223, and Cys-234–Cys-254. Asn-235 carries N-linked (GlcNAc) asparagine glycosylation. The disordered stretch occupies residues 283 to 375 (EVKTTQASTA…LSDLDLLGKK (93 aa)).

Post-translationally, N-glycosylated, with sialylated biantennary complex-type glycans. O-glycosylated, sialylated oligosaccharides. In terms of processing, bradykinin is released from kininogen by kallikrein. Post-translationally, the N-terminus is blocked. As to expression, expressed in the skin, liver, intestine, spleen, pancreas and kidney.

The protein localises to the cytoplasm. Its subcellular location is the vacuole. Functionally, inhibits papain and ficin (cysteine proteinases) but not trypsin (a serine proteinase). This Salmo salar (Atlantic salmon) protein is Kininogen (LOC106584303).